The following is a 211-amino-acid chain: Somatotropin (211 aa).

The N-terminal stretch at 1 to 23 is a signal peptide; sequence MASGFLLCPVLLAVFFMSPVEVG. His40 provides a ligand contact to Zn(2+). An intrachain disulfide couples Cys73 to Cys184. Glu193 is a binding site for Zn(2+). The cysteines at positions 201 and 209 are disulfide-linked.

It belongs to the somatotropin/prolactin family.

The protein resides in the secreted. In terms of biological role, growth hormone plays an important role in growth control and is involved in the regulation of several anabolic processes. Implicated as an osmoregulatory substance important for seawater adaptation. In Lepisosteus osseus (Long-nosed gar), this protein is Somatotropin (gh).